Reading from the N-terminus, the 937-residue chain is ABC transporter A family member 4 (937 aa).

Helical transmembrane passes span 34-54 (LIVIPFYLCVLLVGIQVLFDT), 340-360 (IASVIGPIFLTWVIVLLFPVI), 394-414 (FLAISTLYIICLMIFGSAIGL), 423-443 (SIQFIFYFLCINLQISIAFLV), 455-475 (VAAYLYVFGSGLLGGFLFQFM), 478-498 (GLSFPRGWIFVMELYPGFSLY), and 528-548 (AMDEVFYIIIIEWFLALIAAY). One can recognise an ABC transporter domain in the interval 618-852 (DKLKKVYPGR…YGGSYVLTMT (235 aa)). 653–660 (GPNGAGKT) is an ATP binding site.

It belongs to the ABC transporter superfamily. ABCA family. CPR flippase (TC 3.A.1.211) subfamily.

Its subcellular location is the membrane. The sequence is that of ABC transporter A family member 4 (ABCA4) from Arabidopsis thaliana (Mouse-ear cress).